A 194-amino-acid polypeptide reads, in one-letter code: 21 kDa hemolysin (194 aa).

Residues 1 to 19 (MRTRSRSTVRPLWPPPSPA) form the signal peptide. 2 BON domains span residues 49–118 (DDEV…RTGE) and 127–194 (IDSW…NYVQ).

Its subcellular location is the periplasm. The chain is 21 kDa hemolysin (hly) from Actinobacillus pleuropneumoniae (Haemophilus pleuropneumoniae).